The primary structure comprises 553 residues: T-complex protein 1 subunit eta (553 aa).

Position 41 (glycine 41) interacts with ADP. Residue glycine 41 participates in ATP binding. Aspartate 92 serves as a coordination point for Mg(2+). Residues glycine 93, threonine 94, threonine 95, serine 96, serine 164, and serine 165 each contribute to the ADP site. ATP is bound at residue glycine 93. ATP is bound at residue serine 96. Arginine 398 and glycine 409 together coordinate ATP. Residues glycine 409, glutamate 494, and arginine 499 each contribute to the ADP site. Arginine 499 contacts ATP. Residues 523 to 553 (PRSTVDAPPGGRGRGRGQTPQPLRPRSVALS) are disordered. Low complexity predominate over residues 539–553 (GQTPQPLRPRSVALS).

As to quaternary structure, component of the chaperonin-containing T-complex (TRiC), a hexadecamer composed of two identical back-to-back stacked rings enclosing a protein folding chamber. Each ring is made up of eight different subunits: TCP1/CCT1, CCT2, CCT3, CCT4, CCT5, CCT6A/CCT6, CCT7, CCT8.

The protein resides in the cytoplasm. It catalyses the reaction ATP + H2O = ADP + phosphate + H(+). Its function is as follows. Component of the chaperonin-containing T-complex (TRiC), a molecular chaperone complex that assists the folding of actin, tubulin and other proteins upon ATP hydrolysis. The polypeptide is T-complex protein 1 subunit eta (Gallus gallus (Chicken)).